A 673-amino-acid polypeptide reads, in one-letter code: Probable serine/threonine-protein kinase SCO3848 (673 aa).

The Protein kinase domain maps to 11 to 277 (YELGPVLGRG…EMRVDIEACL (267 aa)). ATP-binding positions include 17-25 (LGRGGMAEV) and K40. D138 acts as the Proton acceptor in catalysis. A disordered region spans residues 302-345 (DQPTTALRSDGGGGATTMLPPMNPDDGGYGYDERPDRRRQQPRK). 4 PASTA domains span residues 379-445 (GNDK…VVST), 446-511 (GAPK…EVAK), 512-580 (AEEK…VVGK), and 581-649 (AVEK…MTVP). Residues 472–500 (FEVETKQTESSQDEGTILSQNPDPGKELE) are disordered. Positions 479 to 493 (TESSQDEGTILSQNP) are enriched in polar residues. 2 disordered regions span residues 613 to 641 (AQGSPGDDNAKVFASNPQPGSEVDDPAAT) and 653 to 673 (GNGNGGNGNGGAIAGLPGFGD).

Belongs to the protein kinase superfamily. Ser/Thr protein kinase family.

It catalyses the reaction L-seryl-[protein] + ATP = O-phospho-L-seryl-[protein] + ADP + H(+). The enzyme catalyses L-threonyl-[protein] + ATP = O-phospho-L-threonyl-[protein] + ADP + H(+). The polypeptide is Probable serine/threonine-protein kinase SCO3848 (Streptomyces coelicolor (strain ATCC BAA-471 / A3(2) / M145)).